Reading from the N-terminus, the 352-residue chain is Coproporphyrin III ferrochelatase (352 aa).

2 residues coordinate Fe-coproporphyrin III: Ser52 and Tyr121. Residues His178 and Glu267 each coordinate Fe(2+).

Belongs to the ferrochelatase family.

It localises to the cytoplasm. It carries out the reaction Fe-coproporphyrin III + 2 H(+) = coproporphyrin III + Fe(2+). It functions in the pathway porphyrin-containing compound metabolism; protoheme biosynthesis. In terms of biological role, involved in coproporphyrin-dependent heme b biosynthesis. Catalyzes the insertion of ferrous iron into coproporphyrin III to form Fe-coproporphyrin III. The chain is Coproporphyrin III ferrochelatase from Propionibacterium freudenreichii subsp. freudenreichii.